The primary structure comprises 59 residues: Putative conotoxin (59 aa).

The N-terminal stretch at 1–25 (MGMRMMFTVFLLVVLATTVVPITLA) is a signal peptide. A propeptide spanning residues 26 to 47 (SATDGRNAAANARVSPVISKSS) is cleaved from the precursor.

The protein belongs to the conotoxin A superfamily. In terms of tissue distribution, expressed by the venom duct.

It localises to the secreted. Functionally, acts as a neurotoxin. This is Putative conotoxin from Conus imperialis (Imperial cone).